The following is an 872-amino-acid chain: Cellulose synthase catalytic subunit [UDP-forming] (872 aa).

4 consecutive transmembrane segments (helical) span residues 30–50 (SAFSATLGCFWMILAWIFIPL), 151–171 (ILGIIVTFSLILALICVTQPF), 173–193 (PLAQFIFLMLLWGVALIVRRM), and 230–250 (LVCGLILLFAETYAWIVLVLG). The tract at residues 271–364 (LWPSVDIFVP…FVSIFDCDHV (94 aa)) is catalytic subdomain A. Residue D313 is part of the active site. The substrate site is built by D360 and D362. A catalytic subdomain B region spans residues 441 to 501 (KPLDEIGGIA…GQRIRWARGM (61 aa)). The active site involves D457. 5 helical membrane passes run 525–545 (VNAMFHFLSGIPRLIFLTAPL), 547–567 (FLLLHAYIIYAPALMIALFVL), 592–612 (IYETVLAWYIAPPTLVALINP), 640–660 (IFLVLLNLVGVAVGIWRYFYG), and 668–688 (VVVSMVWVFYNLIVLGGAVAV). The PilZ domain maps to 694 to 790 (QVRRSHRVEM…QHIDFVQCTF (97 aa)). Residues 833–853 (SVKGIFRVLTSLVSWVVSFIP) traverse the membrane as a helical segment.

Belongs to the glycosyltransferase 2 family. The cofactor is Mg(2+).

The protein resides in the cell inner membrane. It carries out the reaction [(1-&gt;4)-beta-D-glucosyl](n) + UDP-alpha-D-glucose = [(1-&gt;4)-beta-D-glucosyl](n+1) + UDP + H(+). It functions in the pathway glycan metabolism; bacterial cellulose biosynthesis. With respect to regulation, activated by bis-(3'-5') cyclic diguanylic acid (c-di-GMP). In terms of biological role, catalytic subunit of cellulose synthase. It polymerizes uridine 5'-diphosphate glucose to cellulose, which is produced as an extracellular component for mechanical and chemical protection at the onset of the stationary phase, when the cells exhibit multicellular behavior (rdar morphotype). Coexpression of cellulose and thin aggregative fimbriae (curli fimbrae or fibers) leads to a hydrophobic network with tightly packed cells embedded in a highly inert matrix that confers cohesion, elasticity and tissue-like properties to colonies. The chain is Cellulose synthase catalytic subunit [UDP-forming] (bcsA) from Escherichia coli (strain K12).